Here is a 276-residue protein sequence, read N- to C-terminus: Bifunctional protein FolD (276 aa).

NADP(+)-binding positions include Asn157 to Ser159, Ser182, and Ile223.

The protein belongs to the tetrahydrofolate dehydrogenase/cyclohydrolase family. As to quaternary structure, homodimer.

The enzyme catalyses (6R)-5,10-methylene-5,6,7,8-tetrahydrofolate + NADP(+) = (6R)-5,10-methenyltetrahydrofolate + NADPH. It carries out the reaction (6R)-5,10-methenyltetrahydrofolate + H2O = (6R)-10-formyltetrahydrofolate + H(+). Its pathway is one-carbon metabolism; tetrahydrofolate interconversion. In terms of biological role, catalyzes the oxidation of 5,10-methylenetetrahydrofolate to 5,10-methenyltetrahydrofolate and then the hydrolysis of 5,10-methenyltetrahydrofolate to 10-formyltetrahydrofolate. In Thermoplasma acidophilum (strain ATCC 25905 / DSM 1728 / JCM 9062 / NBRC 15155 / AMRC-C165), this protein is Bifunctional protein FolD.